The chain runs to 419 residues: Histidine--tRNA ligase (419 aa).

It belongs to the class-II aminoacyl-tRNA synthetase family.

The protein resides in the cytoplasm. It carries out the reaction tRNA(His) + L-histidine + ATP = L-histidyl-tRNA(His) + AMP + diphosphate + H(+). This is Histidine--tRNA ligase from Pyrobaculum aerophilum (strain ATCC 51768 / DSM 7523 / JCM 9630 / CIP 104966 / NBRC 100827 / IM2).